The sequence spans 276 residues: MATLEDKLLGEKLEYYCSSSEGEDNGDEGGDNKGASGKSRCSGLTIDTNPDATPAGGFRQQSSTNTGPKGVVKDWQRFKQLEAERRDETERQRLALAKKLTITATTSAEDEERKRQEELDAELDELMSEDFLQQYQKQRMAEMLRQTGHHQQFGQVQQLTSHEEFLACVEQENKHTTIIIHIYERQLAACATLNKCLDSLASDYPSIKFAKICSSVAGMSRDFRTKGLPALLVYKAQAVIGNFVRLTDDLSDDFFASDVESFLIEHGIIVDRALYN.

A phosphoserine mark is found at serine 18, serine 19, serine 20, and serine 42. Residues 18 to 74 are disordered; sequence SSSEGEDNGDEGGDNKGASGKSRCSGLTIDTNPDATPAGGFRQQSSTNTGPKGVVKD. A Phosducin domain is found at 62 to 272; the sequence is SSTNTGPKGV…LIEHGIIVDR (211 aa). Residues 153 to 276 form a thioredoxin fold region; it reads FGQVQQLTSH…GIIVDRALYN (124 aa).

This sequence belongs to the phosducin family. In terms of assembly, forms a complex with the beta and gamma subunits of the GTP-binding proteins. Interacts with the CCT chaperonin complex.

In terms of biological role, functions as a co-chaperone for CCT in the assembly of heterotrimeric G protein complexes, facilitates the assembly of both Gbeta-Ggamma and RGS-Gbeta5 heterodimers. In Drosophila melanogaster (Fruit fly), this protein is Phosducin-like protein 1.